Here is a 135-residue protein sequence, read N- to C-terminus: Photosystem II extrinsic protein U (135 aa).

A signal peptide spans 1-29 (MKRLLSWLTGALLMAGLLAGLILPGSVHA).

Belongs to the PsbU family. In terms of assembly, PSII is composed of 1 copy each of membrane proteins PsbA, PsbB, PsbC, PsbD, PsbE, PsbF, PsbH, PsbI, PsbJ, PsbK, PsbL, PsbM, PsbT, PsbX, PsbY, Psb30/Ycf12, peripheral proteins PsbO, CyanoQ (PsbQ), PsbU, PsbV and a large number of cofactors. It forms dimeric complexes.

It localises to the cellular thylakoid membrane. In terms of biological role, one of the extrinsic, lumenal subunits of photosystem II (PSII). PSII is a light-driven water plastoquinone oxidoreductase, using light energy to abstract electrons from H(2)O, generating a proton gradient subsequently used for ATP formation. The extrinsic proteins stabilize the structure of photosystem II oxygen-evolving complex (OEC), the ion environment of oxygen evolution and protect the OEC against heat-induced inactivation. In Parasynechococcus marenigrum (strain WH8102), this protein is Photosystem II extrinsic protein U.